Consider the following 513-residue polypeptide: MSLSLPPLIAVACLVVALARISWLPLRSWLRRRRRTHQLAAQLPGPRNLPLLGNFHMFFGLEPWQVPHLINQLAKKYDGTFKLKMGSNFSLMMFQPRDIEVVLGSSQLLDKAVEYSFLRGWLNDGLLLSGGRKWHRRRKIITPAFHFRILESYDEIFDRQTRLLIHKWQQTLGHSFDLGHDVHLFTLDVICETAMGVSTNAQTNADSDYVRAVKTISTVLHKRMFNIFYRFDLTYMLTPLAWAERRALNVLHKFTEKIIVQRREELLRGGVTQTTDGADVGAKSKMVFLDILLQSNIDDKPLTNLDIREEVDTFMFEGHDTTSSGITFFFYNIALYPECQRKCVEEIVSVLGKDTETPVTYDLLNNLNYMDLCIKETLRMYPSVPLLGRKVLQECEINGKIIPAGTNIGISPLFLGRSEDISSEPNTFKPERFDVVTSAEKLNPHAYIPFSAGPRNCIGQKFAMLEIKAIAANVLRHYEIEFVGNAEESPVLIAELILRTKDPLMFKLKKRVI.

Glutamate 317 and cysteine 457 together coordinate heme.

This sequence belongs to the cytochrome P450 family. It depends on heme as a cofactor.

The protein localises to the endoplasmic reticulum membrane. The protein resides in the microsome membrane. May play an important role in the maintenance of specific insect-host plant relationships. May be involved in xenobiotic metabolism. This is Cytochrome P450 4d10 (Cyp4d10) from Drosophila mettleri (Fruit fly).